A 227-amino-acid chain; its full sequence is Cytochrome c oxidase subunit 2 (227 aa).

Topologically, residues 1 to 14 are mitochondrial intermembrane; the sequence is MAHPMQLGFQDAAS. The chain crosses the membrane as a helical span at residues 15–45; the sequence is PIMEELLYFHDHTLMIVFMISSLVLYIISLM. The Mitochondrial matrix portion of the chain corresponds to 46–59; it reads LSTELTHTSTMDAQ. A helical membrane pass occupies residues 60 to 87; sequence EVETVWTILPAVILILIALPSLRILYMM. Residues 88–227 are Mitochondrial intermembrane-facing; it reads DEINTPSMTL…YFEEWLLKSL (140 aa). Cu cation is bound by residues histidine 161, cysteine 196, glutamate 198, cysteine 200, histidine 204, and methionine 207. Glutamate 198 lines the Mg(2+) pocket. Tyrosine 218 is modified (phosphotyrosine).

Belongs to the cytochrome c oxidase subunit 2 family. Component of the cytochrome c oxidase (complex IV, CIV), a multisubunit enzyme composed of 14 subunits. The complex is composed of a catalytic core of 3 subunits MT-CO1, MT-CO2 and MT-CO3, encoded in the mitochondrial DNA, and 11 supernumerary subunits COX4I, COX5A, COX5B, COX6A, COX6B, COX6C, COX7A, COX7B, COX7C, COX8 and NDUFA4, which are encoded in the nuclear genome. The complex exists as a monomer or a dimer and forms supercomplexes (SCs) in the inner mitochondrial membrane with NADH-ubiquinone oxidoreductase (complex I, CI) and ubiquinol-cytochrome c oxidoreductase (cytochrome b-c1 complex, complex III, CIII), resulting in different assemblies (supercomplex SCI(1)III(2)IV(1) and megacomplex MCI(2)III(2)IV(2)). Found in a complex with TMEM177, COA6, COX18, COX20, SCO1 and SCO2. Interacts with TMEM177 in a COX20-dependent manner. Interacts with COX20. Interacts with COX16. Requires Cu cation as cofactor.

The protein resides in the mitochondrion inner membrane. The catalysed reaction is 4 Fe(II)-[cytochrome c] + O2 + 8 H(+)(in) = 4 Fe(III)-[cytochrome c] + 2 H2O + 4 H(+)(out). Component of the cytochrome c oxidase, the last enzyme in the mitochondrial electron transport chain which drives oxidative phosphorylation. The respiratory chain contains 3 multisubunit complexes succinate dehydrogenase (complex II, CII), ubiquinol-cytochrome c oxidoreductase (cytochrome b-c1 complex, complex III, CIII) and cytochrome c oxidase (complex IV, CIV), that cooperate to transfer electrons derived from NADH and succinate to molecular oxygen, creating an electrochemical gradient over the inner membrane that drives transmembrane transport and the ATP synthase. Cytochrome c oxidase is the component of the respiratory chain that catalyzes the reduction of oxygen to water. Electrons originating from reduced cytochrome c in the intermembrane space (IMS) are transferred via the dinuclear copper A center (CU(A)) of subunit 2 and heme A of subunit 1 to the active site in subunit 1, a binuclear center (BNC) formed by heme A3 and copper B (CU(B)). The BNC reduces molecular oxygen to 2 water molecules using 4 electrons from cytochrome c in the IMS and 4 protons from the mitochondrial matrix. This is Cytochrome c oxidase subunit 2 (MT-CO2) from Nycticebus coucang (Slow loris).